The following is a 231-amino-acid chain: 2-C-methyl-D-erythritol 4-phosphate cytidylyltransferase (231 aa).

The protein belongs to the IspD/TarI cytidylyltransferase family. IspD subfamily.

It carries out the reaction 2-C-methyl-D-erythritol 4-phosphate + CTP + H(+) = 4-CDP-2-C-methyl-D-erythritol + diphosphate. It participates in isoprenoid biosynthesis; isopentenyl diphosphate biosynthesis via DXP pathway; isopentenyl diphosphate from 1-deoxy-D-xylulose 5-phosphate: step 2/6. Its function is as follows. Catalyzes the formation of 4-diphosphocytidyl-2-C-methyl-D-erythritol from CTP and 2-C-methyl-D-erythritol 4-phosphate (MEP). The chain is 2-C-methyl-D-erythritol 4-phosphate cytidylyltransferase from Clostridium kluyveri (strain NBRC 12016).